The chain runs to 462 residues: Myo-inositol transporter 3B (462 aa).

10 consecutive transmembrane segments (helical) span residues 1–21, 31–51, 61–81, 91–111, 194–214, 218–238, 245–265, 289–309, 324–344, and 354–374; these read MAILISDVFFTIGAVLIASSY, IILGIGVGGAAVIAPLFITET, IGVNAFFIPFGQVVADAIGAG, LLFALGVVPSVLQLLLFHYLP, LCGFNTLLYYAGTLFGLLGLS, LGGLIPAGTNAVFVLIGMSLV, GLMLFGVPIMLLGLVWNIIGF, VVIGGIVFFVVGYGLTYSHLV, GSGVATTVCWIANLVVSVSYL, and GTYGFYLGLSVIGFAFVVFCF.

It belongs to the major facilitator superfamily. Sugar transporter (TC 2.A.1.1) family.

The protein resides in the cell membrane. It catalyses the reaction myo-inositol(out) + H(+)(out) = myo-inositol(in) + H(+)(in). In terms of biological role, transporter for myo-inositol. The polypeptide is Myo-inositol transporter 3B (Cryptococcus neoformans var. grubii serotype A (strain H99 / ATCC 208821 / CBS 10515 / FGSC 9487) (Filobasidiella neoformans var. grubii)).